The chain runs to 99 residues: NADH-quinone oxidoreductase subunit K (99 aa).

3 consecutive transmembrane segments (helical) span residues 3–23 (PENYLYLSALLFTIGAAGVLI), 28–48 (IIVFMCIELMLNASNLAFVTF), and 59–79 (VFAFFTMVVAAAEVVVGLAII).

Belongs to the complex I subunit 4L family. In terms of assembly, NDH-1 is composed of 14 different subunits. Subunits NuoA, H, J, K, L, M, N constitute the membrane sector of the complex.

The protein localises to the cell membrane. The enzyme catalyses a quinone + NADH + 5 H(+)(in) = a quinol + NAD(+) + 4 H(+)(out). NDH-1 shuttles electrons from NADH, via FMN and iron-sulfur (Fe-S) centers, to quinones in the respiratory chain. The immediate electron acceptor for the enzyme in this species is believed to be a menaquinone. Couples the redox reaction to proton translocation (for every two electrons transferred, four hydrogen ions are translocated across the cytoplasmic membrane), and thus conserves the redox energy in a proton gradient. The polypeptide is NADH-quinone oxidoreductase subunit K (Rhodococcus jostii (strain RHA1)).